The following is a 212-amino-acid chain: Uridine kinase (212 aa).

Gly13–Thr20 provides a ligand contact to ATP.

The protein belongs to the uridine kinase family.

It is found in the cytoplasm. The enzyme catalyses uridine + ATP = UMP + ADP + H(+). The catalysed reaction is cytidine + ATP = CMP + ADP + H(+). Its pathway is pyrimidine metabolism; CTP biosynthesis via salvage pathway; CTP from cytidine: step 1/3. The protein operates within pyrimidine metabolism; UMP biosynthesis via salvage pathway; UMP from uridine: step 1/1. This Bacillus cereus (strain G9842) protein is Uridine kinase.